The primary structure comprises 532 residues: Omega-hydroxyceramide transacylase (532 aa).

One can recognise a PNPLA domain in the interval 16–185 (ISFSGSGFLS…TGMQPCAFWT (170 aa)). The short motif at 51 to 55 (GTSAG) is the GXSXG element. Ser-53 serves as the catalytic Nucleophile. The Proton acceptor role is filled by Asp-172. The DGA/G signature appears at 172-174 (DGG). Disordered stretches follow at residues 290-457 (PERS…ELGQ) and 489-532 (VTES…SKVQ). The segment covering 310–322 (PHKEWVPKGDGRG) has biased composition (basic and acidic residues). Low complexity-rich tracts occupy residues 380 to 389 (PPSSTPGSSL) and 397 to 411 (SPLS…SGSP). The span at 517 to 532 (GFPRHSGSKKPSSKVQ) shows a compositional bias: basic residues.

Expressed in the digestive system. Expressed in the epidermis of skin keratinocytes. Strongly expressed in the granular layer. Expressed in the upper epidermis and eccrine sweat glands of the dermis and in the region of keratin filament bundles, which is more pronounced in upper epidermal layers and in the lower cornified layers.

The protein resides in the cytoplasm. It catalyses the reaction an N-(omega-hydroxy-ultra-long chain fatty acyl)-sphingoid base + a (9Z,12Z)-octadecadienoyl-containing triacyl-sn-glycerol = an N-[omega-(9Z,12Z-octadecadienoyloxy)-O-ultra-long chain fatty acyl]-sphingoid base + a diacylglycerol. It carries out the reaction an N-(omega-hydroxy-ultra-long chain fatty acyl)-sphing-4-enine + a (9Z,12Z)-octadecadienoyl-containing triacyl-sn-glycerol = an N-(omega-(9Z,12Z-octadecadienoyloxy)-ultra-long chain fatty acyl)-sphing-4-enine + a diacylglycerol. The catalysed reaction is N-(30-hydroxytriacontanoyl)-sphing-4-enine + 1,2,3-tri-(9Z,12Z)-octadecadienoylglycerol = N-[30-(9Z,12Z-octadecadienoyloxy)-triacontanoyl]-sphing-4-enine + di-(9Z,12Z)-octadecadienoylglycerol. The enzyme catalyses N-(28-hydroxyoctacosanoyl)-sphing-4-enine + a (9Z,12Z)-octadecadienoyl-containing triacyl-sn-glycerol = N-(28-(9Z,12Z-octadecadienoyloxy)-octacosanoyl)-sphing-4-enine + a diacylglycerol. It catalyses the reaction N-(32-hydroxydotriacontanoyl)-sphing-4-enine + a (9Z,12Z)-octadecadienoyl-containing triacyl-sn-glycerol = N-(32-(9Z,12Z-octadecadienoyloxy)-dotricontanoyl)-sphing-4-enine + a diacylglycerol. It carries out the reaction N-(32-hydroxydotriacontenoyl)-sphing-4-enine + a (9Z,12Z)-octadecadienoyl-containing triacyl-sn-glycerol = an N-(32-(9Z,12Z-octadecadienoyloxy)-dotriacontenoyl)-sphing-4-enine + a diacylglycerol. The catalysed reaction is an N-(34-hydroxytetratriacontenoyl)-sphing-4-enine + a (9Z,12Z)-octadecadienoyl-containing triacyl-sn-glycerol = an N-(34-(9Z,12Z-octadecadienoyloxy)-tetratriacontenoyl)-sphing-4-enine + a diacylglycerol. The enzyme catalyses an N-(34-hydroxytetratriacontadienoyl)-sphing-4-enine + a (9Z,12Z)-octadecadienoyl-containing triacyl-sn-glycerol = an N-(34-(9Z,12Z-octadecadienoyloxy)-tetratriacontadienoyl)-sphing-4-enine + a diacylglycerol. It catalyses the reaction an N-(36-hydroxyhexatriacontenoyl)-sphing-4-enine + a (9Z,12Z)-octadecadienoyl-containing triacyl-sn-glycerol = an N-(36-(9Z,12Z-octadecadienoyloxy)-hexatriacontenoyl)-sphing-4-enine + a diacylglycerol. It carries out the reaction an N-(36-hydroxyhexatriacontadienoyl)-sphing-4-enine + a (9Z,12Z)-octadecadienoyl-containing triacyl-sn-glycerol = an N-(36-(9Z,12Z-octadecadienoyloxy)-hexatriacontadienoyl)-sphing-4-enine + a diacylglycerol. The catalysed reaction is an N-(38-hydroxyoctatriacontenoyl)-sphing-4-enine + a (9Z,12Z)-octadecadienoyl-containing triacyl-sn-glycerol = an N-(38-(9Z,12Z-octadecadienoyloxy)-octatriacontenoyl)-sphing-4-enine + a diacylglycerol. In terms of biological role, omega-hydroxyceramide transacylase involved in the synthesis of omega-O-acylceramides (esterified omega-hydroxyacyl-sphingosine; EOS), which are extremely hydrophobic lipids involved in skin barrier formation. Catalyzes the last step of the synthesis of omega-O-acylceramides by transferring linoleic acid from triglycerides to an omega-hydroxyceramide. Omega-O-acylceramides, are required for the biogenesis of lipid lamellae in the stratum corneum and the formation of the cornified lipid envelope which are essential for the epidermis barrier function. These lipids also play a role in keratinocyte differentiation. May also act on omega-hydroxylated ultra-long chain fatty acids (omega-OH ULCFA) and acylglucosylceramides (GlcEOS). This is Omega-hydroxyceramide transacylase from Homo sapiens (Human).